A 218-amino-acid polypeptide reads, in one-letter code: Uracil-DNA glycosylase (218 aa).

Asp-59 functions as the Proton acceptor in the catalytic mechanism.

It belongs to the uracil-DNA glycosylase (UDG) superfamily. UNG family.

The protein localises to the cytoplasm. The enzyme catalyses Hydrolyzes single-stranded DNA or mismatched double-stranded DNA and polynucleotides, releasing free uracil.. Functionally, excises uracil residues from the DNA which can arise as a result of misincorporation of dUMP residues by DNA polymerase or due to deamination of cytosine. This is Uracil-DNA glycosylase from Staphylococcus aureus (strain MSSA476).